A 145-amino-acid chain; its full sequence is Putative pre-16S rRNA nuclease (145 aa).

It belongs to the YqgF nuclease family.

Its subcellular location is the cytoplasm. Could be a nuclease involved in processing of the 5'-end of pre-16S rRNA. The protein is Putative pre-16S rRNA nuclease of Levilactobacillus brevis (strain ATCC 367 / BCRC 12310 / CIP 105137 / JCM 1170 / LMG 11437 / NCIMB 947 / NCTC 947) (Lactobacillus brevis).